The primary structure comprises 121 residues: Chromosome transmission fidelity protein 8 homolog (121 aa).

Belongs to the CTF8 family. In terms of assembly, component of the CTF18-RFC complex, which consists of CTF18, CTF8, DSCC1, RFC2, RFC3, RFC4 and RFC5. The CTF18-RFC complex does not interact with the Rad9/Rad1/Hus1 complex. The CTF18-RFC complex interacts with POLH. CTF18/CTF8/DSCC1 associate with PCNA. CTF8 exists as a dimer with DSCC1.

Its subcellular location is the nucleus. Its function is as follows. Chromosome cohesion factor involved in sister chromatid cohesion and fidelity of chromosome transmission. Component of one of the cell nuclear antigen loader complexes, CTF18-replication factor C (CTF18-RFC), which consists of CTF18, CTF8, DSCC1, RFC2, RFC3, RFC4 and RFC5. The CTF18-RFC complex binds to single-stranded and primed DNAs and has weak ATPase activity that is stimulated the presence of primed DNA, replication protein A (RPA) and proliferating cell nuclear antigen (PCNA). The CTF18-RFC complex catalyzes the ATP-dependent loading of PCNA onto primed and gapped DNA. It also interacts with and stimulates POLH, which is suggestive of a protein network that coordinates DNA repair, recombination and chromosome cohesion reactions with replication fork progression. This is Chromosome transmission fidelity protein 8 homolog from Rattus norvegicus (Rat).